The sequence spans 897 residues: 3'-5' exonuclease DinG (897 aa).

The 154-residue stretch at 8 to 161 folds into the Exonuclease domain; that stretch reads VVDLETTGNQ…DEDAATTAKL (154 aa). One can recognise a Helicase ATP-binding domain in the interval 241 to 496; it reads SKAVDQLGLT…KAIDQLEKQR (256 aa). Residue 276 to 283 coordinates ATP; that stretch reads ASLGSGKS. The DEAH box signature appears at 448–451; that stretch reads DEAH. The Helicase C-terminal domain maps to 703–883; the sequence is NIDEYVASIV…NYRQKKGDIQ (181 aa).

The protein belongs to the helicase family. DinG subfamily. Type 2 sub-subfamily.

3'-5' exonuclease. This is 3'-5' exonuclease DinG from Staphylococcus aureus (strain bovine RF122 / ET3-1).